A 364-amino-acid polypeptide reads, in one-letter code: Phosphoserine aminotransferase (364 aa).

Residue Arg42 participates in L-glutamate binding. Pyridoxal 5'-phosphate is bound by residues Gly76–Arg77, Trp102, Thr156, Asp175, and Gln198. Lys199 is modified (N6-(pyridoxal phosphate)lysine). Asn240–Thr241 contacts pyridoxal 5'-phosphate.

It belongs to the class-V pyridoxal-phosphate-dependent aminotransferase family. SerC subfamily. In terms of assembly, homodimer. Pyridoxal 5'-phosphate is required as a cofactor.

It localises to the cytoplasm. It catalyses the reaction O-phospho-L-serine + 2-oxoglutarate = 3-phosphooxypyruvate + L-glutamate. The enzyme catalyses 4-(phosphooxy)-L-threonine + 2-oxoglutarate = (R)-3-hydroxy-2-oxo-4-phosphooxybutanoate + L-glutamate. It functions in the pathway amino-acid biosynthesis; L-serine biosynthesis; L-serine from 3-phospho-D-glycerate: step 2/3. The protein operates within cofactor biosynthesis; pyridoxine 5'-phosphate biosynthesis; pyridoxine 5'-phosphate from D-erythrose 4-phosphate: step 3/5. Functionally, catalyzes the reversible conversion of 3-phosphohydroxypyruvate to phosphoserine and of 3-hydroxy-2-oxo-4-phosphonooxybutanoate to phosphohydroxythreonine. The chain is Phosphoserine aminotransferase from Shewanella sediminis (strain HAW-EB3).